The primary structure comprises 280 residues: Phosphatidylserine decarboxylase proenzyme (280 aa).

Catalysis depends on charge relay system; for autoendoproteolytic cleavage activity residues aspartate 88, histidine 145, and serine 249. The active-site Schiff-base intermediate with substrate; via pyruvic acid; for decarboxylase activity is serine 249. The residue at position 249 (serine 249) is a Pyruvic acid (Ser); by autocatalysis.

It belongs to the phosphatidylserine decarboxylase family. PSD-B subfamily. Prokaryotic type I sub-subfamily. In terms of assembly, heterodimer of a large membrane-associated beta subunit and a small pyruvoyl-containing alpha subunit. Requires pyruvate as cofactor. Post-translationally, is synthesized initially as an inactive proenzyme. Formation of the active enzyme involves a self-maturation process in which the active site pyruvoyl group is generated from an internal serine residue via an autocatalytic post-translational modification. Two non-identical subunits are generated from the proenzyme in this reaction, and the pyruvate is formed at the N-terminus of the alpha chain, which is derived from the carboxyl end of the proenzyme. The autoendoproteolytic cleavage occurs by a canonical serine protease mechanism, in which the side chain hydroxyl group of the serine supplies its oxygen atom to form the C-terminus of the beta chain, while the remainder of the serine residue undergoes an oxidative deamination to produce ammonia and the pyruvoyl prosthetic group on the alpha chain. During this reaction, the Ser that is part of the protease active site of the proenzyme becomes the pyruvoyl prosthetic group, which constitutes an essential element of the active site of the mature decarboxylase.

Its subcellular location is the cell membrane. It catalyses the reaction a 1,2-diacyl-sn-glycero-3-phospho-L-serine + H(+) = a 1,2-diacyl-sn-glycero-3-phosphoethanolamine + CO2. The protein operates within phospholipid metabolism; phosphatidylethanolamine biosynthesis; phosphatidylethanolamine from CDP-diacylglycerol: step 2/2. Its function is as follows. Catalyzes the formation of phosphatidylethanolamine (PtdEtn) from phosphatidylserine (PtdSer). This Chromobacterium violaceum (strain ATCC 12472 / DSM 30191 / JCM 1249 / CCUG 213 / NBRC 12614 / NCIMB 9131 / NCTC 9757 / MK) protein is Phosphatidylserine decarboxylase proenzyme.